Here is a 102-residue protein sequence, read N- to C-terminus: UV-induced protein uvi31 (102 aa).

Belongs to the BolA/IbaG family.

It is found in the mitochondrion matrix. It localises to the cytoplasm. The protein resides in the nucleus. Acts as a mitochondrial iron-sulfur (Fe-S) cluster assembly factor that facilitates [4Fe-4S] cluster insertion into a subset of mitochondrial proteins such as lipoyl synthase (LS) and succinate dehydrogenase (SDH). Required during the last step of iron-sulfur protein assembly when the iron-sulfur cluster is inserted into the target protein. Probably acts together with the monothiol glutaredoxin grx5. Not required for [2Fe-2S] cluster insertion into mitochondrial proteins. May be involved in control of cell division, especially during the resumption from cell cycle arrest. The protein is UV-induced protein uvi31 of Schizosaccharomyces pombe (strain 972 / ATCC 24843) (Fission yeast).